Consider the following 91-residue polypeptide: Cell division protein ZapA (91 aa).

Residues 58–91 adopt a coiled-coil conformation; sequence LTAVNIASEYLKLKEEYNRLREQLKKEKDGERDD.

It belongs to the ZapA family. Type 2 subfamily. As to quaternary structure, homodimer. Interacts with FtsZ.

The protein localises to the cytoplasm. Its function is as follows. Activator of cell division through the inhibition of FtsZ GTPase activity, therefore promoting FtsZ assembly into bundles of protofilaments necessary for the formation of the division Z ring. It is recruited early at mid-cell but it is not essential for cell division. The protein is Cell division protein ZapA of Geobacillus kaustophilus (strain HTA426).